A 439-amino-acid polypeptide reads, in one-letter code: Oocyte zinc finger protein XlCOF28 (439 aa).

9 consecutive C2H2-type zinc fingers follow at residues 6–28, 34–56, 62–84, 90–112, 118–140, 146–168, 174–196, 202–224, and 230–252; these read YECTECEKTFSNQSVLSLHQRTH, FKCTECEKSFMKRSQLIVHKKCH, YMCTFCEKGYNQHSKLIEHIRTH, FTCTECKKSFTKRCNLTEHLRIH, HKCNLCDKTFHYPSNLVEHQRTH, FQCTECDKSFIKMSKLMVHLRIH, YKCSECDKSFSQQSTLVVHQRTH, FQCSHCEKSFSYHYAFVVHERTH, and YKCSMCDKAYSQRSNLKLHQKTH. Disordered regions lie at residues 246 to 275 and 285 to 304; these read KLHQKTHESKPQQDSPNCEKTFEQESAPKT and AGLEKVPELPEATNSVESPE. 4 C2H2-type zinc fingers span residues 333 to 355, 361 to 383, 389 to 411, and 417 to 439; these read HKCTECDKCFLEKSKLVVHQRTH, FKCSVCDKTFIRMVHLLEHRKIH, YTCAECGKSFIRMSKLTVHRRTH, and YICAECGKQFSQQSNLVVHQRIH.

This sequence belongs to the krueppel C2H2-type zinc-finger protein family.

It localises to the nucleus. Functionally, may be involved in transcriptional regulation. The sequence is that of Oocyte zinc finger protein XlCOF28 from Xenopus laevis (African clawed frog).